The primary structure comprises 1013 residues: NHS-like protein 3 (1013 aa).

Residue lysine 17 is modified to Phosphoserine. Residues 20 to 195 (SAKAESDNRQ…PPGSRDAVRI (176 aa)) form a disordered region. The span at 73–89 (QHQERQKLSKGGWDHGD) shows a compositional bias: basic and acidic residues. Composition is skewed to polar residues over residues 90–99 (TQSIQSSQTG) and 106–120 (SIYS…SSTA). At serine 92 the chain carries Phosphoserine. A Phosphotyrosine modification is found at tyrosine 108. Phosphoserine occurs at positions 136, 143, and 159. Threonine 160 is modified (phosphothreonine). The span at 168–178 (VQKELGLRNNR) shows a compositional bias: basic and acidic residues. The residue at position 213 (serine 213) is a Phosphoserine. An Asymmetric dimethylarginine modification is found at arginine 318. Residues serine 320, serine 325, serine 328, serine 336, serine 337, serine 339, and serine 340 each carry the phosphoserine modification. The disordered stretch occupies residues 330 to 1013 (RSLGRFSSAS…PGSDPQKKLV (684 aa)). Over residues 336–361 (SSASSPRPRSRNASSSSDNWSHSQSS) the composition is skewed to low complexity. Polar residues predominate over residues 362-375 (ETIVSDGSTLSSKG). Residues serine 398, serine 402, and serine 407 each carry the phosphoserine modification. Positions 408-427 (TAETSDTASIRSSGQLSGRS) are enriched in polar residues. 2 stretches are compositionally biased toward low complexity: residues 484-493 (VGAVSCPPSS) and 515-530 (RTLS…SGTP). Threonine 529 bears the Phosphothreonine mark. Serine 543 bears the Phosphoserine mark. A compositionally biased stretch (low complexity) spans 564-577 (SVSSSLTSLCSSSS). Threonine 591 carries the post-translational modification Phosphothreonine. Residues 600-614 (PPHPKVPAPFSPPPS) show a composition bias toward pro residues. Serine 610 carries the phosphoserine modification. Positions 615 to 633 (KSKSSNQAAPVLAAPAVAP) are enriched in low complexity. Residues 635–657 (QVSTIDTSPASPSMPQTTLTPAQ) show a composition bias toward polar residues. Phosphoserine occurs at positions 667 and 671. Pro residues-rich tracts occupy residues 668–683 (PPPS…PPPT) and 706–716 (PSWPPPPPPAP). Residues 779–795 (PQKDSVGKHSGAPREDS) show a composition bias toward basic and acidic residues. A compositionally biased stretch (polar residues) spans 814–829 (GASTGIPNPSPGSSAP). Serine 838, serine 842, and serine 848 each carry phosphoserine. A compositionally biased stretch (low complexity) spans 859-873 (ASSLAASESPASALP). Residues serine 909, serine 952, and serine 959 each carry the phosphoserine modification. Pro residues predominate over residues 942-961 (KAPPPVARKPSVGVPPPSPS). Residues 964 to 975 (RTESLTAPSTNG) show a composition bias toward polar residues.

In terms of biological role, able to directly activate the TNF-NFkappaB signaling pathway. The sequence is that of NHS-like protein 3 (Nhsl3) from Mus musculus (Mouse).